A 201-amino-acid chain; its full sequence is dCTP deaminase, dUMP-forming (201 aa).

Residues 101-106 (KSSLGR), Asp119, 127-129 (TLE), Gln148, Tyr162, and Gln174 contribute to the dCTP site. The active-site Proton donor/acceptor is the Glu129.

It belongs to the dCTP deaminase family. As to quaternary structure, homotrimer.

The enzyme catalyses dCTP + 2 H2O = dUMP + NH4(+) + diphosphate. It functions in the pathway pyrimidine metabolism; dUMP biosynthesis; dUMP from dCTP: step 1/1. Functionally, bifunctional enzyme that catalyzes both the deamination of dCTP to dUTP and the hydrolysis of dUTP to dUMP without releasing the toxic dUTP intermediate. The polypeptide is dCTP deaminase, dUMP-forming (Parafrankia sp. (strain EAN1pec)).